The primary structure comprises 1117 residues: DNA-directed RNA polymerase subunit beta (1117 aa).

Positions 1094–1117 are disordered; it reads QLARRTPPRPTYESLSRESLDDDE. The span at 1108–1117 shows a compositional bias: basic and acidic residues; sequence LSRESLDDDE.

It belongs to the RNA polymerase beta chain family. In terms of assembly, in cyanobacteria the RNAP catalytic core is composed of 2 alpha, 1 beta, 1 beta', 1 gamma and 1 omega subunit. When a sigma factor is associated with the core the holoenzyme is formed, which can initiate transcription.

It catalyses the reaction RNA(n) + a ribonucleoside 5'-triphosphate = RNA(n+1) + diphosphate. Its function is as follows. DNA-dependent RNA polymerase catalyzes the transcription of DNA into RNA using the four ribonucleoside triphosphates as substrates. The protein is DNA-directed RNA polymerase subunit beta of Trichormus variabilis (strain ATCC 29413 / PCC 7937) (Anabaena variabilis).